A 317-amino-acid polypeptide reads, in one-letter code: Transaldolase (317 aa).

Lys-132 serves as the catalytic Schiff-base intermediate with substrate.

It belongs to the transaldolase family. Type 1 subfamily. Homodimer.

It localises to the cytoplasm. The catalysed reaction is D-sedoheptulose 7-phosphate + D-glyceraldehyde 3-phosphate = D-erythrose 4-phosphate + beta-D-fructose 6-phosphate. Its pathway is carbohydrate degradation; pentose phosphate pathway; D-glyceraldehyde 3-phosphate and beta-D-fructose 6-phosphate from D-ribose 5-phosphate and D-xylulose 5-phosphate (non-oxidative stage): step 2/3. In terms of biological role, transaldolase is important for the balance of metabolites in the pentose-phosphate pathway. In Haemophilus influenzae (strain 86-028NP), this protein is Transaldolase.